Here is a 404-residue protein sequence, read N- to C-terminus: Spore germination protein YndF (404 aa).

The N-terminal stretch at 1–24 (MKSKLKRQLPAMVIVCLLMICVTG) is a signal peptide. Cysteine 25 carries the N-palmitoyl cysteine lipid modification. Cysteine 25 carries the S-diacylglycerol cysteine lipid modification.

The protein belongs to the GerABKC lipoprotein family.

The protein localises to the cell membrane. In terms of biological role, may be involved in spore germination. The chain is Spore germination protein YndF (yndF) from Bacillus subtilis (strain 168).